A 382-amino-acid polypeptide reads, in one-letter code: Aminotransferase FGSG_00049 (382 aa).

A pyridoxal 5'-phosphate-binding site is contributed by arginine 80. Residue lysine 181 is modified to N6-(pyridoxal phosphate)lysine. Glutamate 217 lines the pyridoxal 5'-phosphate pocket.

The protein belongs to the class-IV pyridoxal-phosphate-dependent aminotransferase family. Requires pyridoxal 5'-phosphate as cofactor.

It functions in the pathway mycotoxin biosynthesis. Its function is as follows. Aminotransferase; part of the gene cluster that mediates the biosynthesis of gramillins A and B, bicyclic lipopeptides that induce cell death in maize leaves but not in wheat leaves. The nonribosomal peptide synthetase GRA1 incorporates respectively a glutamic adic (Glu), a leucine (Leu), a serine (Ser), a hydroxyglutamine (HOGln), a 2-amino decanoic acid, and 2 cysteins (CysB and CysA). The biosynthesis of 2-amino decanoic acid incorporated in gramillins could be initiated by a fatty acid synthase composed of the alpha and beta subunits FGSG_00036 and FGSG_11656. The cytochrome P450 monooxygenase FGSG_15680 could hydroxylate the fatty acid chain. Subsequent oxidation to the ketone by the oxidoreductase FGSG_00048 and transamination by aminotransferase FGSG_00049 could form 2-amino-decanoic acid. On the other hand, FGSG_15680 could also be responsible for the HO-modified glutamine at the gamma-position. Whether hydroxylation occurs on the fully assembled product or on the Gln residue prior to assembly into the gramillins requires further proof. The thioredoxin FGSG_00043 could also be required for the disulfide-bond formation between CysA and CysB. The specific involvement of the remaining proteins from the cluster is more difficult to discern, but could have broader regulatory (FGSG_00040 and FGSG_11657) or enzymatic functions (FGSG_00044 and FGSG_00045). The final C-domain of GRA1 does not possess the expected sequence of a termination CT domain, often implicated in macrocyclization and release of a cyclopeptidein fungal NRPs; and the thioesterase FGSG_00047 may act in concert with the terminal C-domain of GRA1 to catalyze the formation of the macrocyclic anhydride and release of the products. The polypeptide is Aminotransferase FGSG_00049 (Gibberella zeae (strain ATCC MYA-4620 / CBS 123657 / FGSC 9075 / NRRL 31084 / PH-1) (Wheat head blight fungus)).